A 257-amino-acid polypeptide reads, in one-letter code: uncharacterized protein (257 aa).

7 N-linked (GlcNAc...) asparagine; by host glycosylation sites follow: N61, N95, N102, N111, N139, N148, and N152. The chain crosses the membrane as a helical span at residues 233 to 253 (WYIIGGIFWVIVLIILVIFII).

The protein localises to the host membrane. It is found in the virion. This is an uncharacterized protein from Acanthamoeba polyphaga (Amoeba).